The primary structure comprises 209 residues: uncharacterized protein (209 aa).

The region spanning 1-199 is the FCP1 homology domain; it reads MQVFLDLDET…DELKRVTASL (199 aa).

This is an uncharacterized protein from Dryophytes versicolor (chameleon treefrog).